Here is a 280-residue protein sequence, read N- to C-terminus: UPF0276 protein CC_2906 (280 aa).

The protein belongs to the UPF0276 family.

This chain is UPF0276 protein CC_2906, found in Caulobacter vibrioides (strain ATCC 19089 / CIP 103742 / CB 15) (Caulobacter crescentus).